The chain runs to 365 residues: tRNA N6-adenosine threonylcarbamoyltransferase (365 aa).

Fe cation contacts are provided by histidine 119 and histidine 123. Substrate contacts are provided by residues 141 to 145 (LVSGG), aspartate 174, glycine 187, and asparagine 289. Aspartate 317 lines the Fe cation pocket. A disordered region spans residues 341–365 (SARPRWPLDKTSPALIGSGKKGAKA).

Belongs to the KAE1 / TsaD family. Fe(2+) serves as cofactor.

The protein resides in the cytoplasm. It carries out the reaction L-threonylcarbamoyladenylate + adenosine(37) in tRNA = N(6)-L-threonylcarbamoyladenosine(37) in tRNA + AMP + H(+). Its function is as follows. Required for the formation of a threonylcarbamoyl group on adenosine at position 37 (t(6)A37) in tRNAs that read codons beginning with adenine. Is involved in the transfer of the threonylcarbamoyl moiety of threonylcarbamoyl-AMP (TC-AMP) to the N6 group of A37, together with TsaE and TsaB. TsaD likely plays a direct catalytic role in this reaction. The protein is tRNA N6-adenosine threonylcarbamoyltransferase of Ruegeria sp. (strain TM1040) (Silicibacter sp.).